We begin with the raw amino-acid sequence, 260 residues long: Apolipoprotein A-I (260 aa).

An N-terminal signal peptide occupies residues 1-18; it reads MKFAALALALLLAVGSHA. The 3 X approximate tandem repeats stretch occupies residues 32-63; the sequence is ARAVLDVYLTQVKDMSLRAVNQLDDPQYAEFK. Tandem repeats lie at residues 64–85 and 87–107. The 10 X approximate tandem repeats stretch occupies residues 64–260; the sequence is TNLAQRIEEM…EIIAASVTKS (197 aa). The 3; half-length repeat unit spans residues 108–118; it reads VDLEALKSSLA. Tandem repeats lie at residues 119–140, 141–162, 163–184, 185–206, and 207–225. The stretch at 226–236 is one 9; half-length repeat; that stretch reads VDTDALRTKIT. Repeat unit 10 spans residues 237–260; it reads PLVEEIKVKMNAIFEIIAASVTKS.

The protein belongs to the apolipoprotein A1/A4/E family. In terms of tissue distribution, strong expression in liver with lower expression in intestine.

It is found in the secreted. Its function is as follows. Participates in the reverse transport of cholesterol from tissues to the liver for excretion by promoting cholesterol efflux from tissues and by acting as a cofactor for the lecithin cholesterol acyltransferase (LCAT). The chain is Apolipoprotein A-I (apoa1) from Sparus aurata (Gilthead sea bream).